Consider the following 20-residue polypeptide: Endo-1,6-beta-glucanase (20 aa).

It belongs to the glycosyl hydrolase 5 (cellulase A) family.

The protein localises to the secreted. It is found in the extracellular space. It carries out the reaction Random hydrolysis of (1-&gt;6)-linkages in (1-&gt;6)-beta-D-glucans.. Its function is as follows. Endo-1,6-beta-glucanase that has highest activity against the beta-1,6-glucan pustulan. Also active against the beta-1,6-glucan lutean. Lower activity against laminarin (beta-1,3-glucan with beta-1,6-branches). Little or no activity against gentiobiose, yeast glucan, lichenin, scleroglucan, curdlan, barley glucan, CM cellulose, HE cellulose, pachyman and pullulan. In Acremonium sp, this protein is Endo-1,6-beta-glucanase.